The chain runs to 387 residues: 4-hydroxy-3-methylbut-2-en-1-yl diphosphate synthase (flavodoxin) (387 aa).

Residues Cys293, Cys296, Cys328, and Glu335 each contribute to the [4Fe-4S] cluster site.

Belongs to the IspG family. The cofactor is [4Fe-4S] cluster.

The catalysed reaction is (2E)-4-hydroxy-3-methylbut-2-enyl diphosphate + oxidized [flavodoxin] + H2O + 2 H(+) = 2-C-methyl-D-erythritol 2,4-cyclic diphosphate + reduced [flavodoxin]. It participates in isoprenoid biosynthesis; isopentenyl diphosphate biosynthesis via DXP pathway; isopentenyl diphosphate from 1-deoxy-D-xylulose 5-phosphate: step 5/6. Its function is as follows. Converts 2C-methyl-D-erythritol 2,4-cyclodiphosphate (ME-2,4cPP) into 1-hydroxy-2-methyl-2-(E)-butenyl 4-diphosphate. The sequence is that of 4-hydroxy-3-methylbut-2-en-1-yl diphosphate synthase (flavodoxin) from Treponema denticola (strain ATCC 35405 / DSM 14222 / CIP 103919 / JCM 8153 / KCTC 15104).